Reading from the N-terminus, the 444-residue chain is Glutamyl-tRNA(Gln) amidotransferase subunit D (444 aa).

The Asparaginase/glutaminase domain maps to 92 to 424 (SEIKIISTGG…EKIQNLMITN (333 aa)). Catalysis depends on residues Thr-102, Thr-178, Asp-179, and Lys-257.

The protein belongs to the asparaginase 1 family. GatD subfamily. Heterodimer of GatD and GatE.

It catalyses the reaction L-glutamyl-tRNA(Gln) + L-glutamine + ATP + H2O = L-glutaminyl-tRNA(Gln) + L-glutamate + ADP + phosphate + H(+). Allows the formation of correctly charged Gln-tRNA(Gln) through the transamidation of misacylated Glu-tRNA(Gln) in organisms which lack glutaminyl-tRNA synthetase. The reaction takes place in the presence of glutamine and ATP through an activated gamma-phospho-Glu-tRNA(Gln). The GatDE system is specific for glutamate and does not act on aspartate. This is Glutamyl-tRNA(Gln) amidotransferase subunit D from Saccharolobus solfataricus (strain ATCC 35092 / DSM 1617 / JCM 11322 / P2) (Sulfolobus solfataricus).